We begin with the raw amino-acid sequence, 312 residues long: Glycerol-3-phosphate phosphatase (312 aa).

D30 (nucleophile) is an active-site residue. Positions 30, 32, and 251 each coordinate Mg(2+). Catalysis depends on D32, which acts as the Proton donor.

It belongs to the HAD-like hydrolase superfamily. CbbY/CbbZ/Gph/YieH family. As to quaternary structure, homodimer. Mg(2+) serves as cofactor.

It carries out the reaction O-phospho-L-tyrosyl-[protein] + H2O = L-tyrosyl-[protein] + phosphate. The catalysed reaction is sn-glycerol 1-phosphate + H2O = glycerol + phosphate. It catalyses the reaction sn-glycerol 3-phosphate + H2O = glycerol + phosphate. Functionally, glycerol-3-phosphate phosphatase hydrolyzing glycerol-3-phosphate into glycerol. Thereby, regulates the cellular levels of glycerol-3-phosphate a metabolic intermediate of glucose, lipid and energy metabolism. Was also shown to have a 2-phosphoglycolate phosphatase activity and a tyrosine-protein phosphatase activity. However, their physiological relevance is unclear. In vitro, also has a phosphatase activity toward ADP, ATP, GDP and GTP. This Gallus gallus (Chicken) protein is Glycerol-3-phosphate phosphatase.